The sequence spans 1167 residues: RNA-directed RNA polymerase (1167 aa).

The RdRp catalytic domain occupies 553–735; it reads LTYGILAEAT…KALASYTGLE (183 aa).

It belongs to the reoviridae RNA-directed RNA polymerase family. As to quaternary structure, interacts with VP3 (Potential). Interacts with VP2 (Potential). Interacts with NSP5; this interaction is probably necessary for the formation of functional virus factories.

The protein localises to the virion. The catalysed reaction is RNA(n) + a ribonucleoside 5'-triphosphate = RNA(n+1) + diphosphate. In terms of biological role, RNA-directed RNA polymerase that is involved in both transcription and genome replication. Together with VP3 capping enzyme, forms an enzyme complex positioned near the channels situated at each of the five-fold vertices of the core. Following infection, the outermost layer of the virus is lost, leaving a double-layered particle (DLP) made up of the core and VP6 shell. VP1 then catalyzes the transcription of fully conservative plus-strand genomic RNAs that are extruded through the DLP's channels into the cytoplasm where they function as mRNAs for translation of viral proteins. One copy of each of the viral (+)RNAs is also recruited during core assembly, together with newly synthesized polymerase complexes and VP2. The polymerase of these novo-formed particles catalyzes the synthesis of complementary minus-strands leading to dsDNA formation. To do so, the polymerase specifically recognizes conserved 3' sequence(s) in plus-strand RNA templates. Once dsRNA synthesis is complete, the polymerase switches to the transcriptional mode, thus providing secondary transcription. The polypeptide is RNA-directed RNA polymerase (Rotavirus X (isolate RVX/Human/Bangladesh/NADRV-B219/2002/GXP[X]) (RV ADRV-N)).